The primary structure comprises 258 residues: NAD-capped RNA hydrolase NudC (258 aa).

R69 serves as a coordination point for substrate. Zn(2+) contacts are provided by C98 and C101. E111 provides a ligand contact to substrate. 2 residues coordinate Zn(2+): C116 and C119. Residue Y124 coordinates substrate. The region spanning 125–248 (PQIAPCIIVA…TVARRLIEDT (124 aa)) is the Nudix hydrolase domain. A divalent metal cation is bound by residues A158, E174, and E178. A Nudix box motif is present at residues 159-180 (GFVEVGETLEQTVAREVMEESG). Substrate is bound at residue 192–199 (QPWPFPMS). E219 provides a ligand contact to a divalent metal cation. A241 is a substrate binding site.

This sequence belongs to the Nudix hydrolase family. NudC subfamily. As to quaternary structure, homodimer. Mg(2+) is required as a cofactor. It depends on Mn(2+) as a cofactor. Requires Zn(2+) as cofactor.

It carries out the reaction a 5'-end NAD(+)-phospho-ribonucleoside in mRNA + H2O = a 5'-end phospho-adenosine-phospho-ribonucleoside in mRNA + beta-nicotinamide D-ribonucleotide + 2 H(+). The catalysed reaction is NAD(+) + H2O = beta-nicotinamide D-ribonucleotide + AMP + 2 H(+). It catalyses the reaction NADH + H2O = reduced beta-nicotinamide D-ribonucleotide + AMP + 2 H(+). MRNA decapping enzyme that specifically removes the nicotinamide adenine dinucleotide (NAD) cap from a subset of mRNAs by hydrolyzing the diphosphate linkage to produce nicotinamide mononucleotide (NMN) and 5' monophosphate mRNA. The NAD-cap is present at the 5'-end of some mRNAs and stabilizes RNA against 5'-processing. Has preference for mRNAs with a 5'-end purine. Catalyzes the hydrolysis of a broad range of dinucleotide pyrophosphates. This Enterobacter sp. (strain 638) protein is NAD-capped RNA hydrolase NudC.